The following is a 129-amino-acid chain: Small ribosomal subunit protein uS11 (129 aa).

Positions 109 to 129 are disordered; it reads VDDTPVPHNGCRPKKKFRKAS. Positions 119 to 129 are enriched in basic residues; sequence CRPKKKFRKAS.

This sequence belongs to the universal ribosomal protein uS11 family. As to quaternary structure, part of the 30S ribosomal subunit. Interacts with proteins S7 and S18. Binds to the C-terminus of IF-3; however exactly how IF-3 interacts with the 30S subunit is unclear.

Its function is as follows. Located on the upper part of the platform of the 30S subunit, where it bridges several disparate RNA helices of the 16S rRNA. Forms part of the Shine-Dalgarno cleft in the 70S ribosome. The sequence is that of Small ribosomal subunit protein uS11 (rpsK) from Thermus thermophilus (strain ATCC BAA-163 / DSM 7039 / HB27).